The primary structure comprises 428 residues: Elongation factor 1-alpha (428 aa).

Residues 5-225 (KPVLNVAFIG…DKFQPPEKPT (221 aa)) enclose the tr-type G domain. A G1 region spans residues 14–21 (GHVDAGKS). Residue 14 to 21 (GHVDAGKS) coordinates GTP. Mg(2+) is bound at residue serine 21. Positions 70-74 (GVTID) are G2. Residues 91–94 (DCPG) form a G3 region. GTP contacts are provided by residues 91–95 (DCPGH) and 149–152 (NKMD). The G4 stretch occupies residues 149 to 152 (NKMD). Positions 189 to 191 (ASL) are G5.

This sequence belongs to the TRAFAC class translation factor GTPase superfamily. Classic translation factor GTPase family. EF-Tu/EF-1A subfamily.

It is found in the cytoplasm. It catalyses the reaction GTP + H2O = GDP + phosphate + H(+). Functionally, GTP hydrolase that promotes the GTP-dependent binding of aminoacyl-tRNA to the A-site of ribosomes during protein biosynthesis. This chain is Elongation factor 1-alpha, found in Methanocaldococcus jannaschii (strain ATCC 43067 / DSM 2661 / JAL-1 / JCM 10045 / NBRC 100440) (Methanococcus jannaschii).